Reading from the N-terminus, the 163-residue chain is MAGTIEVLVAGGQADPGPPLGPELGPTPVDVQAVVNEINDQTEAFDGTEVPVTIDYDDDGSFDIDVGVPPTAALIKDELDFETGSGEPNEEFVADMSAEQLKTVAEQKLPDLLAYDTRNAAKEVAGTCVSLGVTIEGEDARTFNQRLDNGEFDDVFAEAEPAA.

Residues 1–25 (MAGTIEVLVAGGQADPGPPLGPELG) are disordered.

Belongs to the universal ribosomal protein uL11 family. Part of the ribosomal stalk of the 50S ribosomal subunit. Interacts with L10 and the large rRNA to form the base of the stalk. L10 forms an elongated spine to which L12 dimers bind in a sequential fashion forming a multimeric L10(L12)X complex.

Forms part of the ribosomal stalk which helps the ribosome interact with GTP-bound translation factors. This chain is Large ribosomal subunit protein uL11, found in Natronomonas pharaonis (strain ATCC 35678 / DSM 2160 / CIP 103997 / JCM 8858 / NBRC 14720 / NCIMB 2260 / Gabara) (Halobacterium pharaonis).